Here is a 333-residue protein sequence, read N- to C-terminus: Foldase protein PrsA (333 aa).

The N-terminal stretch at 1–22 is a signal peptide; sequence MKKSTKLLAGIVTLASAMTLAA. The N-palmitoyl cysteine moiety is linked to residue cysteine 23. Cysteine 23 carries S-diacylglycerol cysteine lipidation. The PpiC domain maps to 145 to 240; it reads TPEMTTQVIT…NKFYIVKVTK (96 aa). The interval 301–333 is disordered; the sequence is DKKASKANTSKSDQKTSSDSSKDSQSSKSKSEK. Positions 312–322 are enriched in basic and acidic residues; that stretch reads SDQKTSSDSSK. Positions 323 to 333 are enriched in low complexity; it reads DSQSSKSKSEK.

This sequence belongs to the PrsA family.

The protein resides in the cell membrane. The enzyme catalyses [protein]-peptidylproline (omega=180) = [protein]-peptidylproline (omega=0). Plays a major role in protein secretion by helping the post-translocational extracellular folding of several secreted proteins. This is Foldase protein PrsA from Streptococcus equi subsp. zooepidemicus (strain MGCS10565).